The following is a 202-amino-acid chain: Dephospho-CoA kinase (202 aa).

Residues 5-202 (ILGLTGGIGS…FYLTLRGGQP (198 aa)) form the DPCK domain. 13–18 (GSGKSA) serves as a coordination point for ATP.

The protein belongs to the CoaE family.

It is found in the cytoplasm. It carries out the reaction 3'-dephospho-CoA + ATP = ADP + CoA + H(+). The protein operates within cofactor biosynthesis; coenzyme A biosynthesis; CoA from (R)-pantothenate: step 5/5. Catalyzes the phosphorylation of the 3'-hydroxyl group of dephosphocoenzyme A to form coenzyme A. The sequence is that of Dephospho-CoA kinase from Stutzerimonas stutzeri (Pseudomonas stutzeri).